Reading from the N-terminus, the 365-residue chain is Aminomethyltransferase (365 aa).

This sequence belongs to the GcvT family. In terms of assembly, the glycine cleavage system is composed of four proteins: P, T, L and H.

It catalyses the reaction N(6)-[(R)-S(8)-aminomethyldihydrolipoyl]-L-lysyl-[protein] + (6S)-5,6,7,8-tetrahydrofolate = N(6)-[(R)-dihydrolipoyl]-L-lysyl-[protein] + (6R)-5,10-methylene-5,6,7,8-tetrahydrofolate + NH4(+). In terms of biological role, the glycine cleavage system catalyzes the degradation of glycine. In Chlorobaculum tepidum (strain ATCC 49652 / DSM 12025 / NBRC 103806 / TLS) (Chlorobium tepidum), this protein is Aminomethyltransferase.